The sequence spans 371 residues: Cathepsin W (371 aa).

Residues 1–21 (MTLTAHLSYFLVLLLAGQGLS) form the signal peptide. A propeptide spanning residues 22 to 125 (DSLLTKDAGP…KVESNTWGES (104 aa)) is cleaved from the precursor. N-linked (GlcNAc...) asparagine glycosylation is found at N48 and N112. 3 disulfides stabilise this stretch: C148–C189, C182–C224, and C282–C347. Residue C151 is part of the active site. N203 carries an N-linked (GlcNAc...) asparagine glycan. Residues H289 and N326 contribute to the active site. Residue N344 is glycosylated (N-linked (GlcNAc...) asparagine).

Belongs to the peptidase C1 family.

Its subcellular location is the endoplasmic reticulum. Its function is as follows. May have a specific function in the mechanism or regulation of T-cell cytolytic activity. This chain is Cathepsin W (Ctsw), found in Mus musculus (Mouse).